The following is a 281-amino-acid chain: Beta-lactamase (281 aa).

An N-terminal signal peptide occupies residues 1-24 (MKKLIFLIVIALVLSACNSNSSHA). Catalysis depends on Ser63, which acts as the Acyl-ester intermediate. Position 225-227 (225-227 (KSG)) interacts with substrate.

Belongs to the class-A beta-lactamase family.

It carries out the reaction a beta-lactam + H2O = a substituted beta-amino acid. This chain is Beta-lactamase (blaZ), found in Staphylococcus aureus.